A 708-amino-acid chain; its full sequence is Nucleolar protein 11-like (708 aa).

It is found in the nucleus. It localises to the nucleolus. Ribosome biogenesis factor. May be required for both optimal rDNA transcription and pre-rRNA processing. This Danio rerio (Zebrafish) protein is Nucleolar protein 11-like (nol11).